A 296-amino-acid chain; its full sequence is Myeloid differentiation primary response protein MyD88 (296 aa).

The region spanning 54-109 (MGFEYLEIRELETRPDPTRSLLDAWQGRSGASVGRLLELLALLDREDILKELKSRI) is the Death domain. Residues 110 to 155 (EEDCQKYLGKQQNQESEKPLQVARVESSVPQTKELGGITTLDDPLG) form an intermediate domain region. In terms of domain architecture, TIR spans 159-293 (ELFDAFICYC…WFWTRLAKAL (135 aa)). Serine 244 carries the post-translational modification Phosphoserine.

Homodimer. Also forms heterodimers with TIRAP. Binds to TLR2, TLR4, IRAK1, IRAK2 and IRAK4 via their respective TIR domains. Interacts with IL18R1. Interacts with BMX, IL1RL1, IKBKE and IRF7. Interacts with LRRFIP1 and LRRFIP2; this interaction positively regulates Toll-like receptor (TLR) signaling in response to agonist. Interacts with FLII. LRRFIP1 and LRRFIP2 compete with FLII for MYD88-binding. Interacts with IRF1. Upon IL1B treatment, forms a complex with PELI1, IRAK1, IRAK4 and TRAF6; this complex recruits MAP3K7/TAK1, TAB1 and TAB2 to mediate NF-kappa-B activation. Direct binding of SMAD6 to PELI1 prevents the complex formation and hence negatively regulates IL1R-TLR signaling and eventually NF-kappa-B-mediated gene expression. May interact with PIK3AP1. Interacts (via TIR domain) with DHX9 (via H2A and OB-fold regions); this interaction is direct. Interacts with OTUD4 deubiquitinase; the interaction is direct. Ubiquitinated; undergoes 'Lys-63'-linked polyubiquitination. OTUD4 specifically hydrolyzes 'Lys-63'-linked polyubiquitinated MYD88. Deubiquitinated by USP3 that cleaves 'Lys-63'-linked ubiquitin chains leading to inhibition of MYD88-induced NF-kappa-B signaling. Detected in bone marrow. Isoform 1 is expressed in testis, kidney, lung, ovary, adrenal gland, provstate, thymus and heart, and weakly in skeletal muscle, liver, spleen and brain. Isoform 2 is mainly expressed in the spleen and weakly in brain.

Its subcellular location is the cytoplasm. It is found in the nucleus. Its function is as follows. Adapter protein involved in the Toll-like receptor and IL-1 receptor signaling pathway in the innate immune response. Acts via IRAK1, IRAK2, IRF7 and TRAF6, leading to NF-kappa-B activation, cytokine secretion and the inflammatory response. Increases IL-8 transcription. Involved in IL-18-mediated signaling pathway. Activates IRF1 resulting in its rapid migration into the nucleus to mediate an efficient induction of IFN-beta, NOS2/INOS, and IL12A genes. Upon TLR8 activation by GU-rich single-stranded RNA (GU-rich RNA) derived from viruses, induces IL1B release through NLRP3 inflammasome activation. MyD88-mediated signaling in intestinal epithelial cells is crucial for maintenance of gut homeostasis and controls the expression of the antimicrobial lectin REG3G in the small intestine. Mediates leukocyte recruitment at the inflammatory site. Functionally, defective in its ability to induce IRAK phosphorylation and NF-kappa-B activation and can function as a negative regulator of activation by IL-1 or lipopolysaccharide (LPS). This is Myeloid differentiation primary response protein MyD88 from Mus musculus (Mouse).